We begin with the raw amino-acid sequence, 151 residues long: 3-hydroxyacyl-[acyl-carrier-protein] dehydratase FabZ (151 aa).

Histidine 54 is a catalytic residue.

It belongs to the thioester dehydratase family. FabZ subfamily.

The protein localises to the cytoplasm. The catalysed reaction is a (3R)-hydroxyacyl-[ACP] = a (2E)-enoyl-[ACP] + H2O. Involved in unsaturated fatty acids biosynthesis. Catalyzes the dehydration of short chain beta-hydroxyacyl-ACPs and long chain saturated and unsaturated beta-hydroxyacyl-ACPs. The chain is 3-hydroxyacyl-[acyl-carrier-protein] dehydratase FabZ from Sodalis glossinidius (strain morsitans).